A 77-amino-acid chain; its full sequence is Cysteine-rich protein 1 (77 aa).

In terms of domain architecture, LIM zinc-binding spans 2–63 (PKCPKCNKEV…HPCYAAMFGP (62 aa)). K9 and K22 each carry N6-acetyllysine. R68 carries the post-translational modification Omega-N-methylarginine.

Its function is as follows. Seems to have a role in zinc absorption and may function as an intracellular zinc transport protein. In Homo sapiens (Human), this protein is Cysteine-rich protein 1 (CRIP1).